Consider the following 902-residue polypeptide: Calcium-activated chloride channel regulator 3A-1 (902 aa).

Residues 1–21 (MVPGLQVLLFLTLHLLQNTES) form the signal peptide. Residues 45 to 199 (DERLIPSIKE…RITGTNVVHN (155 aa)) are metalloprotease domain. N-linked (GlcNAc...) asparagine glycosylation is present at Asn75. His155 is a Zn(2+) binding site. Residue Glu156 is part of the active site. Residues His159 and Asp166 each coordinate Zn(2+). A VWFA domain is found at 308-476 (VVCLVLDKSG…NSLIDAFSRI (169 aa)). Asn504, Asn515, Asn630, Asn687, Asn697, Asn809, and Asn814 each carry an N-linked (GlcNAc...) asparagine glycan.

The protein belongs to the CLCR family. In terms of assembly, part of a complex composed of complement component C3, CLCA1/CLCA3, A2ML1/OH and ALB/serum albumin. Post-translationally, glycosylated. In terms of processing, the 130-kDa product is autoproteolytically processed by the metalloprotease domain and yields two subunits, a 90-kDa protein and a group of 32- to 38-kDa proteins. The cleavage is necessary for calcium-activated chloride channel (CaCC) activation activity. In terms of tissue distribution, highly expressed in skin and spleen, and at lower levels in kidney and liver. Also detected in lung and brain. Not detected in lung or brain. In lung, localizes to respiratory epithelia of the bronchi and trachea and the submucosal glands.

It is found in the cell membrane. Its function is as follows. Plays a role in modulating chloride current across the plasma membrane in a calcium-dependent manner. In Mus musculus (Mouse), this protein is Calcium-activated chloride channel regulator 3A-1.